A 465-amino-acid chain; its full sequence is Cysteine--tRNA ligase (465 aa).

Position 27 (Cys27) interacts with Zn(2+). A 'HIGH' region motif is present at residues 29-39 (PTVYNFFHIGN). Cys207, His232, and Glu236 together coordinate Zn(2+). The 'KMSKS' region signature appears at 264 to 268 (KMSKS). Lys267 contacts ATP.

Belongs to the class-I aminoacyl-tRNA synthetase family. Monomer. Zn(2+) is required as a cofactor.

Its subcellular location is the cytoplasm. The catalysed reaction is tRNA(Cys) + L-cysteine + ATP = L-cysteinyl-tRNA(Cys) + AMP + diphosphate. The polypeptide is Cysteine--tRNA ligase (Clostridium botulinum (strain Okra / Type B1)).